The following is a 191-amino-acid chain: Dephospho-CoA kinase (191 aa).

One can recognise a DPCK domain in the interval 3 to 191 (AIGITGSYAS…NLIANLECRV (189 aa)). Residue 11-16 (ASGKTF) participates in ATP binding.

This sequence belongs to the CoaE family.

It localises to the cytoplasm. It catalyses the reaction 3'-dephospho-CoA + ATP = ADP + CoA + H(+). It functions in the pathway cofactor biosynthesis; coenzyme A biosynthesis; CoA from (R)-pantothenate: step 5/5. Its function is as follows. Catalyzes the phosphorylation of the 3'-hydroxyl group of dephosphocoenzyme A to form coenzyme A. This is Dephospho-CoA kinase from Rickettsia bellii (strain RML369-C).